Here is a 101-residue protein sequence, read N- to C-terminus: Ribonuclease kappa-B (101 aa).

The next 2 membrane-spanning stretches (helical) occupy residues 13–33 and 68–88; these read ACGIVLSVWGVIMLVLLGVFF and VSYNCFIAAAIYIVLGGFSFC.

It belongs to the RNase K family.

Its subcellular location is the membrane. In terms of biological role, endoribonuclease which preferentially cleaves ApU and ApG phosphodiester bonds. This chain is Ribonuclease kappa-B (rnasek-b), found in Xenopus laevis (African clawed frog).